The following is a 501-amino-acid chain: ATP-dependent rRNA helicase RRP3 (501 aa).

Positions 3–44 (KIVKRKEKKANDELTSLAEKIRAKALENQKKLIEAEKEGGSE) form a coiled coil. Positions 36–79 (EAEKEGGSESDSEEDATAEKKKVLKSKSKSTVSTQNENTNEDES) are disordered. A phosphoserine mark is found at Ser43, Ser45, and Ser47. The Q motif signature appears at 81 to 109 (ESFSELNLVPELIQACKNLNYSKPTPIQS). Residues 112–284 (IPPALEGHDI…RASLTNPVKC (173 aa)) enclose the Helicase ATP-binding domain. 125–132 (AQTGSGKT) provides a ligand contact to ATP. Residues 231–234 (DEAD) carry the DEAD box motif. Residues 307-461 (LKNTYLIYLL…NIILTLRDSV (155 aa)) enclose the Helicase C-terminal domain. A disordered region spans residues 480 to 501 (IARGKGRRGRMMTRENMDMGER). Over residues 491-501 (MTRENMDMGER) the composition is skewed to basic and acidic residues.

It belongs to the DEAD box helicase family. DDX47/RRP3 subfamily. In terms of assembly, interacts with the SSU processome.

The protein localises to the nucleus. It carries out the reaction ATP + H2O = ADP + phosphate + H(+). Its function is as follows. ATP-dependent rRNA helicase required for pre-ribosomal RNA processing. Involved in the maturation of the 35S-pre-rRNA and to its cleavage to mature 18S rRNA. The protein is ATP-dependent rRNA helicase RRP3 of Saccharomyces cerevisiae (strain YJM789) (Baker's yeast).